The following is a 453-amino-acid chain: Na(+)/H(+) antiporter NhaA (453 aa).

11 helical membrane passes run 28 to 48 (FLHIEAFSGVVLLLAAAAALI), 79 to 99 (LHFLINDGLMTIFFLVVGMEI), 115 to 135 (ALPLAAALGGVVVPALIYFIL), 144 to 164 (GWAVPTATDIAFAVGVLALLG), 173 to 193 (VFLLALAIIDDIVAVLIIAVF), 196 to 216 (GGMDYSGFIIAAVGILMVLGM), 241 to 261 (TGAHPTLAGVVLGLMTPVFAP), 321 to 341 (VAFGIMPLFALANAGVSLDGI), 355 to 375 (VLIALVAGKPLGIIGASFLMV), 393 to 413 (LVGLLAGIGFTMSIFIATLAF), and 424 to 444 (LGILLASLSAAVLGLAWGFFQ).

This sequence belongs to the NhaA Na(+)/H(+) (TC 2.A.33) antiporter family.

It localises to the cell inner membrane. The catalysed reaction is Na(+)(in) + 2 H(+)(out) = Na(+)(out) + 2 H(+)(in). Its function is as follows. Na(+)/H(+) antiporter that extrudes sodium in exchange for external protons. The polypeptide is Na(+)/H(+) antiporter NhaA (Janthinobacterium sp. (strain Marseille) (Minibacterium massiliensis)).